The chain runs to 432 residues: Trigger factor (432 aa).

The 86-residue stretch at 161 to 246 folds into the PPIase FKBP-type domain; sequence EDRVTIDFSG…LKKVEERELP (86 aa).

Belongs to the FKBP-type PPIase family. Tig subfamily.

The protein resides in the cytoplasm. The catalysed reaction is [protein]-peptidylproline (omega=180) = [protein]-peptidylproline (omega=0). In terms of biological role, involved in protein export. Acts as a chaperone by maintaining the newly synthesized protein in an open conformation. Functions as a peptidyl-prolyl cis-trans isomerase. This Enterobacter sp. (strain 638) protein is Trigger factor.